Reading from the N-terminus, the 49-residue chain is Agglutinin-1 (49 aa).

Homooligomer. Glycosylated.

Beta-galactoside specific lectin. Has a hemagglutinating activity on erythrocytes. This Pomacea flagellata (Apple snail) protein is Agglutinin-1.